A 328-amino-acid polypeptide reads, in one-letter code: DNA polymerase IV (328 aa).

Positions 6 to 187 constitute a UmuC domain; that stretch reads IIHIDMDYFF…LDIGDFPGVG (182 aa). Mg(2+) contacts are provided by Asp10 and Asp105. The active site involves Glu106.

This sequence belongs to the DNA polymerase type-Y family. In terms of assembly, monomer. Mg(2+) is required as a cofactor.

The protein localises to the cytoplasm. The enzyme catalyses DNA(n) + a 2'-deoxyribonucleoside 5'-triphosphate = DNA(n+1) + diphosphate. Its function is as follows. Poorly processive, error-prone DNA polymerase involved in untargeted mutagenesis. Copies undamaged DNA at stalled replication forks, which arise in vivo from mismatched or misaligned primer ends. These misaligned primers can be extended by PolIV. Exhibits no 3'-5' exonuclease (proofreading) activity. May be involved in translesional synthesis, in conjunction with the beta clamp from PolIII. In Staphylococcus aureus (strain bovine RF122 / ET3-1), this protein is DNA polymerase IV.